A 281-amino-acid polypeptide reads, in one-letter code: uncharacterized protein (281 aa).

2 disordered regions span residues 192 to 212 (SNSSVNLSMDKKSDDSKIQET) and 227 to 281 (EDYV…SEEY). Residues 200-211 (MDKKSDDSKIQE) are compositionally biased toward basic and acidic residues. 2 stretches are compositionally biased toward acidic residues: residues 227 to 240 (EDYVDGNEDCISDN) and 249 to 260 (DTDSDLGDLEDP).

Belongs to the cullin family.

This is an uncharacterized protein from Acanthamoeba polyphaga (Amoeba).